The primary structure comprises 677 residues: Methionine--tRNA ligase (677 aa).

Positions 15 to 25 (PYANGSIHLGH) match the 'HIGH' region motif. Residues Cys-146, Cys-149, Cys-159, and Cys-162 each contribute to the Zn(2+) site. The 'KMSKS' region signature appears at 333-337 (KMSKS). Residue Lys-336 coordinates ATP. A tRNA-binding domain is found at 575–677 (DFAKVDLRVA…DGAKPGQQVK (103 aa)).

The protein belongs to the class-I aminoacyl-tRNA synthetase family. MetG type 1 subfamily. In terms of assembly, homodimer. The cofactor is Zn(2+).

The protein localises to the cytoplasm. It catalyses the reaction tRNA(Met) + L-methionine + ATP = L-methionyl-tRNA(Met) + AMP + diphosphate. In terms of biological role, is required not only for elongation of protein synthesis but also for the initiation of all mRNA translation through initiator tRNA(fMet) aminoacylation. In Citrobacter koseri (strain ATCC BAA-895 / CDC 4225-83 / SGSC4696), this protein is Methionine--tRNA ligase.